Reading from the N-terminus, the 558-residue chain is Aurovertin biosynthesis cluster transcription factor aurF (558 aa).

Belongs to the POU transcription factor family. Class-3 subfamily.

The protein localises to the nucleus. In terms of biological role, transcription factor that regulates the expression of the gene cluster that mediates the biosynthesis of aurovertins, fungal polyketides that exhibit potent inhibition of adenosine triphosphate synthase. The sequence is that of Aurovertin biosynthesis cluster transcription factor aurF from Calcarisporium arbuscula (Dendryphion arbuscula).